Reading from the N-terminus, the 520-residue chain is Maturase K (520 aa).

It belongs to the intron maturase 2 family. MatK subfamily.

Its subcellular location is the plastid. It is found in the chloroplast. Functionally, usually encoded in the trnK tRNA gene intron. Probably assists in splicing its own and other chloroplast group II introns. The polypeptide is Maturase K (Aspidistra elatior (Cast-iron plant)).